The chain runs to 215 residues: Proteasome subunit beta (215 aa).

Residues 1-12 (MLGEIQDKVYKG) constitute a propeptide, removed in mature form; by autocatalysis. The Nucleophile role is filled by T13.

The protein belongs to the peptidase T1B family. As to quaternary structure, the 20S proteasome core is composed of 14 alpha and 14 beta subunits that assemble into four stacked heptameric rings, resulting in a barrel-shaped structure. The two inner rings, each composed of seven catalytic beta subunits, are sandwiched by two outer rings, each composed of seven alpha subunits. The catalytic chamber with the active sites is on the inside of the barrel. Has a gated structure, the ends of the cylinder being occluded by the N-termini of the alpha-subunits. Is capped at one or both ends by the proteasome regulatory ATPase, PAN.

The protein resides in the cytoplasm. The enzyme catalyses Cleavage of peptide bonds with very broad specificity.. With respect to regulation, the formation of the proteasomal ATPase PAN-20S proteasome complex, via the docking of the C-termini of PAN into the intersubunit pockets in the alpha-rings, triggers opening of the gate for substrate entry. Interconversion between the open-gate and close-gate conformations leads to a dynamic regulation of the 20S proteasome proteolysis activity. Its function is as follows. Component of the proteasome core, a large protease complex with broad specificity involved in protein degradation. The sequence is that of Proteasome subunit beta from Archaeoglobus profundus (strain DSM 5631 / JCM 9629 / NBRC 100127 / Av18).